We begin with the raw amino-acid sequence, 805 residues long: Arginine/serine-rich protein PNISR (805 aa).

Residues 74-88 (PNNHGNFQGDSNFNR) show a composition bias toward polar residues. Disordered stretches follow at residues 74-331 (PNNH…EEKE) and 382-805 (LTGL…SRSR). Pro residues-rich tracts occupy residues 100 to 115 (PPHP…PTPG) and 183 to 195 (YWQP…PAPP). Residues 197–210 (NRRERPSSFRDRQR) are compositionally biased toward basic and acidic residues. S204 and S211 each carry phosphoserine. K218 is covalently cross-linked (Glycyl lysine isopeptide (Lys-Gly) (interchain with G-Cter in SUMO2)). A coiled-coil region spans residues 237–276 (REGLEKMEREKQKKLEKERMEQQRSQLSKKEKKATEDAEG). Residues 238–258 (EGLEKMEREKQKKLEKERMEQ) are compositionally biased toward basic and acidic residues. S290, S304, S313, and S321 each carry phosphoserine. Acidic residues predominate over residues 290 to 299 (SDEEEEDTEN). Gly residues predominate over residues 384–393 (GLGGLGGYGS). Positions 421 to 463 (QKQEAFWRKEKEQQLLHDKQMEEEKQQTERVTKEMNEFIHKEQ) are enriched in basic and acidic residues. Residues 429 to 461 (KEKEQQLLHDKQMEEEKQQTERVTKEMNEFIHK) adopt a coiled-coil conformation. Phosphoserine occurs at positions 465 and 467. Composition is skewed to basic and acidic residues over residues 470–486 (EARE…KRTP) and 494–506 (EPKK…EKQG). Phosphothreonine is present on T485. K496 is covalently cross-linked (Glycyl lysine isopeptide (Lys-Gly) (interchain with G-Cter in SUMO2)). Residues 508–550 (SRSGSSSSGSSSSNSRTSSTSSTVSSSSYSSSSGSSRTSSRSS) are compositionally biased toward low complexity. Composition is skewed to basic residues over residues 551–579 (SPKR…YSRR), 587–598 (ARVKIRDRRRSN), and 607–639 (RRNR…SRDR). Over residues 659-721 (EAKEQERKKE…KRKRESERTF (63 aa)) the composition is skewed to basic and acidic residues. Residues 673–703 (IDKDRKKKDKEREREQDKRKEKQKREEKDFK) adopt a coiled-coil conformation. Residue K703 forms a Glycyl lysine isopeptide (Lys-Gly) (interchain with G-Cter in SUMO2) linkage. S726 is modified (phosphoserine). Residues 732–753 (IRHDSRQDSKKSTTKDSKKHSG) are compositionally biased toward basic and acidic residues. The span at 754 to 767 (SDSSGRSSSESPGS) shows a compositional bias: low complexity. Basic residues-rich tracts occupy residues 771-781 (KKAKKPKHSRS) and 789-805 (RSGK…SRSR).

It belongs to the splicing factor SR family. Interacts with PNN. In terms of tissue distribution, expressed in heart, skeletal muscle, thymus, spleen, kidney, liver, placenta and leukocytes.

It localises to the nucleus speckle. The protein is Arginine/serine-rich protein PNISR (PNISR) of Homo sapiens (Human).